Reading from the N-terminus, the 177-residue chain is Large ribosomal subunit protein uL6 (177 aa).

Belongs to the universal ribosomal protein uL6 family. As to quaternary structure, part of the 50S ribosomal subunit.

Functionally, this protein binds to the 23S rRNA, and is important in its secondary structure. It is located near the subunit interface in the base of the L7/L12 stalk, and near the tRNA binding site of the peptidyltransferase center. The protein is Large ribosomal subunit protein uL6 of Marinomonas sp. (strain MWYL1).